A 289-amino-acid polypeptide reads, in one-letter code: Elongation factor Ts (289 aa).

The segment at 82 to 85 is involved in Mg(2+) ion dislocation from EF-Tu; the sequence is TDFV.

Belongs to the EF-Ts family.

It localises to the cytoplasm. In terms of biological role, associates with the EF-Tu.GDP complex and induces the exchange of GDP to GTP. It remains bound to the aminoacyl-tRNA.EF-Tu.GTP complex up to the GTP hydrolysis stage on the ribosome. This Marinobacter nauticus (strain ATCC 700491 / DSM 11845 / VT8) (Marinobacter aquaeolei) protein is Elongation factor Ts.